A 536-amino-acid chain; its full sequence is Probable 1,4-beta-D-glucan cellobiohydrolase B (536 aa).

The first 21 residues, methionine 1–alanine 21, serve as a signal peptide directing secretion. A catalytic region spans residues glutamine 22–serine 458. Glutamate 233 serves as the catalytic Nucleophile. Glutamate 238 functions as the Proton donor in the catalytic mechanism. Asparagine 351 and asparagine 414 each carry an N-linked (GlcNAc...) asparagine glycan. The interval threonine 459–serine 500 is ser/Thr-rich linker. A disordered region spans residues serine 464–threonine 499. One can recognise a CBM1 domain in the interval serine 500–leucine 536. 2 cysteine pairs are disulfide-bonded: cysteine 508/cysteine 525 and cysteine 519/cysteine 535.

It belongs to the glycosyl hydrolase 7 (cellulase C) family.

It localises to the secreted. The catalysed reaction is Hydrolysis of (1-&gt;4)-beta-D-glucosidic linkages in cellulose and cellotetraose, releasing cellobiose from the non-reducing ends of the chains.. Its function is as follows. The biological conversion of cellulose to glucose generally requires three types of hydrolytic enzymes: (1) Endoglucanases which cut internal beta-1,4-glucosidic bonds; (2) Exocellobiohydrolases that cut the disaccharide cellobiose from the non-reducing end of the cellulose polymer chain; (3) Beta-1,4-glucosidases which hydrolyze the cellobiose and other short cello-oligosaccharides to glucose. The chain is Probable 1,4-beta-D-glucan cellobiohydrolase B (cbhB) from Aspergillus niger (strain ATCC MYA-4892 / CBS 513.88 / FGSC A1513).